Reading from the N-terminus, the 216-residue chain is Probable transaldolase (216 aa).

The active-site Schiff-base intermediate with substrate is the K83.

This sequence belongs to the transaldolase family. Type 3B subfamily.

Its subcellular location is the cytoplasm. It catalyses the reaction D-sedoheptulose 7-phosphate + D-glyceraldehyde 3-phosphate = D-erythrose 4-phosphate + beta-D-fructose 6-phosphate. It functions in the pathway carbohydrate degradation; pentose phosphate pathway; D-glyceraldehyde 3-phosphate and beta-D-fructose 6-phosphate from D-ribose 5-phosphate and D-xylulose 5-phosphate (non-oxidative stage): step 2/3. Transaldolase is important for the balance of metabolites in the pentose-phosphate pathway. The sequence is that of Probable transaldolase from Symbiobacterium thermophilum (strain DSM 24528 / JCM 14929 / IAM 14863 / T).